Reading from the N-terminus, the 308-residue chain is tRNA pseudouridine synthase B (308 aa).

Asp33 acts as the Nucleophile in catalysis.

The protein belongs to the pseudouridine synthase TruB family. Type 1 subfamily.

It carries out the reaction uridine(55) in tRNA = pseudouridine(55) in tRNA. Responsible for synthesis of pseudouridine from uracil-55 in the psi GC loop of transfer RNAs. This is tRNA pseudouridine synthase B from Nitrosomonas europaea (strain ATCC 19718 / CIP 103999 / KCTC 2705 / NBRC 14298).